A 147-amino-acid polypeptide reads, in one-letter code: Methylglyoxal synthase (147 aa).

An MGS-like domain is found at 1 to 147 (MKGQRNIGMV…TPYVKRLGAK (147 aa)). Residues His-12, Lys-16, 38–41 (TGTT), and 59–60 (SG) each bind substrate. Asp-65 serves as the catalytic Proton donor/acceptor. His-92 contacts substrate.

It belongs to the methylglyoxal synthase family.

It catalyses the reaction dihydroxyacetone phosphate = methylglyoxal + phosphate. In terms of biological role, catalyzes the formation of methylglyoxal from dihydroxyacetone phosphate. This Oleidesulfovibrio alaskensis (strain ATCC BAA-1058 / DSM 17464 / G20) (Desulfovibrio alaskensis) protein is Methylglyoxal synthase.